A 397-amino-acid chain; its full sequence is Elongation factor Tu (397 aa).

The region spanning 10–206 (KPHVNIGTIG…AVDDNVPEPE (197 aa)) is the tr-type G domain. The interval 19 to 26 (GHVDHGKT) is G1. 19-26 (GHVDHGKT) provides a ligand contact to GTP. A Mg(2+)-binding site is contributed by Thr26. The tract at residues 62–66 (GITIN) is G2. The tract at residues 83 to 86 (DAPG) is G3. Residues 83–87 (DAPGH) and 138–141 (NKSD) contribute to the GTP site. Residues 138–141 (NKSD) are G4. The interval 176 to 178 (SAL) is G5.

Belongs to the TRAFAC class translation factor GTPase superfamily. Classic translation factor GTPase family. EF-Tu/EF-1A subfamily. Monomer.

It is found in the cytoplasm. The catalysed reaction is GTP + H2O = GDP + phosphate + H(+). GTP hydrolase that promotes the GTP-dependent binding of aminoacyl-tRNA to the A-site of ribosomes during protein biosynthesis. The protein is Elongation factor Tu of Brevibacterium linens.